Reading from the N-terminus, the 246-residue chain is Ly6/PLAUR domain-containing protein 4 (246 aa).

A signal peptide spans 1–26 (MGPQHLRLVQLFCLLGAISTLPRAGA). An N-linked (GlcNAc...) asparagine glycan is attached at Asn117. A UPAR/Ly6 domain is found at 142–223 (CPTCVGEHMK…LNILEKSQIV (82 aa)). Ala225 carries the GPI-anchor amidated alanine lipid modification. Positions 226 to 246 (ASSRQDPAWGVVLGLLFAFRD) are cleaved as a propeptide — removed in mature form.

The protein resides in the cell membrane. This Homo sapiens (Human) protein is Ly6/PLAUR domain-containing protein 4 (LYPD4).